The primary structure comprises 185 residues: MRVVLITLFLFIGAAVAEDAGIDAITPEEGKANNIIEAYESPRFQKFVTHCSSHVTQTCSGNDPLNNQEASRMNSPFGLSFCLFDSMEKCLADHKASLKDPQDNNNLASMSSLPGSIQNQPLLIETVKFRAVLKTCSHVSARYCFTNPNVATSALADCLMPSLTHCVYPSSSILLPPPPPPPPLI.

An N-terminal signal peptide occupies residues 1 to 17 (MRVVLITLFLFIGAAVA).

It belongs to the nodulin 20 family.

It localises to the symbiosome. It is found in the peribacteroid membrane. Its subcellular location is the peribacteroid space. This chain is Nodulin-20, found in Glycine max (Soybean).